The following is a 420-amino-acid chain: Gamma-glutamyl phosphate reductase (420 aa).

It belongs to the gamma-glutamyl phosphate reductase family.

It localises to the cytoplasm. The catalysed reaction is L-glutamate 5-semialdehyde + phosphate + NADP(+) = L-glutamyl 5-phosphate + NADPH + H(+). Its pathway is amino-acid biosynthesis; L-proline biosynthesis; L-glutamate 5-semialdehyde from L-glutamate: step 2/2. Functionally, catalyzes the NADPH-dependent reduction of L-glutamate 5-phosphate into L-glutamate 5-semialdehyde and phosphate. The product spontaneously undergoes cyclization to form 1-pyrroline-5-carboxylate. This chain is Gamma-glutamyl phosphate reductase, found in Streptococcus gordonii (strain Challis / ATCC 35105 / BCRC 15272 / CH1 / DL1 / V288).